Consider the following 311-residue polypeptide: Aspartate carbamoyltransferase catalytic subunit (311 aa).

Carbamoyl phosphate contacts are provided by R59 and T60. Position 87 (K87) interacts with L-aspartate. Carbamoyl phosphate-binding residues include R109, H139, and Q142. 2 residues coordinate L-aspartate: R172 and R224. Residues A265 and P266 each coordinate carbamoyl phosphate.

This sequence belongs to the aspartate/ornithine carbamoyltransferase superfamily. ATCase family. In terms of assembly, heterododecamer (2C3:3R2) of six catalytic PyrB chains organized as two trimers (C3), and six regulatory PyrI chains organized as three dimers (R2).

It carries out the reaction carbamoyl phosphate + L-aspartate = N-carbamoyl-L-aspartate + phosphate + H(+). It participates in pyrimidine metabolism; UMP biosynthesis via de novo pathway; (S)-dihydroorotate from bicarbonate: step 2/3. Functionally, catalyzes the condensation of carbamoyl phosphate and aspartate to form carbamoyl aspartate and inorganic phosphate, the committed step in the de novo pyrimidine nucleotide biosynthesis pathway. This Streptococcus pyogenes serotype M1 protein is Aspartate carbamoyltransferase catalytic subunit.